The sequence spans 667 residues: Glycine--tRNA ligase beta subunit (667 aa).

The protein belongs to the class-II aminoacyl-tRNA synthetase family. Tetramer of two alpha and two beta subunits.

Its subcellular location is the cytoplasm. The catalysed reaction is tRNA(Gly) + glycine + ATP = glycyl-tRNA(Gly) + AMP + diphosphate. The polypeptide is Glycine--tRNA ligase beta subunit (Rickettsia canadensis (strain McKiel)).